A 485-amino-acid chain; its full sequence is Cysteine--tRNA ligase (485 aa).

Zn(2+) is bound at residue cysteine 27. A 'HIGH' region motif is present at residues 29–39 (ITAYDLCHLGH). Zn(2+) is bound by residues cysteine 208, histidine 233, and glutamate 237. The short motif at 265–269 (KMSKS) is the 'KMSKS' region element. An ATP-binding site is contributed by lysine 268.

It belongs to the class-I aminoacyl-tRNA synthetase family. In terms of assembly, monomer. The cofactor is Zn(2+).

It localises to the cytoplasm. It carries out the reaction tRNA(Cys) + L-cysteine + ATP = L-cysteinyl-tRNA(Cys) + AMP + diphosphate. In Oleidesulfovibrio alaskensis (strain ATCC BAA-1058 / DSM 17464 / G20) (Desulfovibrio alaskensis), this protein is Cysteine--tRNA ligase.